Here is a 148-residue protein sequence, read N- to C-terminus: Large ribosomal subunit protein bL9 (148 aa).

It belongs to the bacterial ribosomal protein bL9 family.

Binds to the 23S rRNA. The protein is Large ribosomal subunit protein bL9 of Ectopseudomonas mendocina (strain ymp) (Pseudomonas mendocina).